We begin with the raw amino-acid sequence, 253 residues long: Imidazole glycerol phosphate synthase subunit HisF (253 aa).

Active-site residues include Asp11 and Asp130.

This sequence belongs to the HisA/HisF family. Heterodimer of HisH and HisF.

It localises to the cytoplasm. The catalysed reaction is 5-[(5-phospho-1-deoxy-D-ribulos-1-ylimino)methylamino]-1-(5-phospho-beta-D-ribosyl)imidazole-4-carboxamide + L-glutamine = D-erythro-1-(imidazol-4-yl)glycerol 3-phosphate + 5-amino-1-(5-phospho-beta-D-ribosyl)imidazole-4-carboxamide + L-glutamate + H(+). It participates in amino-acid biosynthesis; L-histidine biosynthesis; L-histidine from 5-phospho-alpha-D-ribose 1-diphosphate: step 5/9. In terms of biological role, IGPS catalyzes the conversion of PRFAR and glutamine to IGP, AICAR and glutamate. The HisF subunit catalyzes the cyclization activity that produces IGP and AICAR from PRFAR using the ammonia provided by the HisH subunit. In Dehalococcoides mccartyi (strain ATCC BAA-2266 / KCTC 15142 / 195) (Dehalococcoides ethenogenes (strain 195)), this protein is Imidazole glycerol phosphate synthase subunit HisF.